An 839-amino-acid chain; its full sequence is Probable alpha-glucuronidase A (839 aa).

Positions 1–18 (MRWSFLTVLLWLVSLTGA) are cleaved as a signal peptide. 12 N-linked (GlcNAc...) asparagine glycosylation sites follow: Asn49, Asn101, Asn148, Asn221, Asn278, Asn309, Asn342, Asn464, Asn526, Asn575, Asn681, and Asn731.

Belongs to the glycosyl hydrolase 67 family.

It is found in the secreted. It catalyses the reaction an alpha-D-glucuronoside + H2O = D-glucuronate + an alcohol. In terms of biological role, alpha-glucuronidase involved in the hydrolysis of xylan, a major structural heterogeneous polysaccharide found in plant biomass representing the second most abundant polysaccharide in the biosphere, after cellulose. Releases 4-O-methylglucuronic acid from xylan. This is Probable alpha-glucuronidase A (aguA) from Aspergillus flavus (strain ATCC 200026 / FGSC A1120 / IAM 13836 / NRRL 3357 / JCM 12722 / SRRC 167).